Reading from the N-terminus, the 387-residue chain is MDGSDGARRVLVINSGSSSLKFQLVDPESGVAASTGIVERIGEESSPVPDHDAALRRAFDMLAGDGVDLNTAGLVAVGHRVVHGGNTFYRPTVLDDAVIARLHELSELAPLHNPPALLGIEVARRLLPGIAHVAVFDTGFFHDLPPAAATYAIDRELADRWQIRRYGFHGTSHRYVSEQAAAFLDRPLRGLKQIVLHLGNGCSASAIAGTRPLDTSMGLTPLEGLVMGTRSGDIDPSVVSYLCHTAGMGVDDVESMLNHRSGVVGLSGVRDFRRLRELIESGDGAAQLAYSVFTHRLRKYIGAYLAVLGHTDVISFTAGIGENDAAVRRDAVSGMEELGIVLDERRNLPGAKGARQISADDSPITVLVVPTNEELAIARDCVRVLGG.

Asn14 contributes to the Mg(2+) binding site. Lys21 is an ATP binding site. Arg80 contributes to the substrate binding site. The active-site Proton donor/acceptor is the Asp137. ATP-binding positions include 197 to 201, 271 to 273, and 319 to 323; these read HLGNG, DFR, and GIGEN. Glu373 is a Mg(2+) binding site.

The protein belongs to the acetokinase family. In terms of assembly, homodimer. It depends on Mg(2+) as a cofactor. Mn(2+) is required as a cofactor.

The protein resides in the cytoplasm. The catalysed reaction is acetate + ATP = acetyl phosphate + ADP. It functions in the pathway metabolic intermediate biosynthesis; acetyl-CoA biosynthesis; acetyl-CoA from acetate: step 1/2. Its function is as follows. Catalyzes the formation of acetyl phosphate from acetate and ATP. Can also catalyze the reverse reaction. The sequence is that of Acetate kinase from Mycobacterium avium (strain 104).